A 537-amino-acid polypeptide reads, in one-letter code: MADNLRRLVSNEALRSLQDKLESWLREYNANSCDQNLNHCLELIEQVAKVQGQLFGILTIAAQEGGHYDGVETIKSRLLPWLEASFTAASLGKPVDSKVPSLQDTFDKDRHKESGTRDIQQLDADLSATRNQLNQVQDDMAETEKTLEEPKNRSAISLLAAEEEINQLKKQLKSLQAQEESRHRNSDRRRSEKRGSERRRVELRGSEQRVSDLDRRSANQRNAEAVCDYEKQLRTLKDEIAVLSAEKSVLQGRSARSRSPSPAPCSRSHSRSRSTSPSSAKARTPSPNRAKLSSVARKAALLSRFSDAYSQGRLDAQCLLRRCIDKAETVQRIIYIATVEAFHVAKMAFRHFKIRVRKSLTPSCAGSNDFEDAVSDYIICHLDLYDSQSSVNDVIRAMNVNPKISFPPEVDFCLLSNFIQEICCIAFAMQTLEPPLDIAFGADGEIFNDCKYRRSYDSDFTAPLVFYHVWPALMENDCVIMKGEAVTRRGAFWNSVRSVSRCRSRSLSPICPRTRIGLGMISRSRSPSPIRCGLPRF.

The interval 1-273 (MADNLRRLVS…PCSRSHSRSR (273 aa)) is interaction with YWHAG/14-3-3 protein gamma. Residues Ser85, Ser127, Ser154, and Ser157 each carry the phosphoserine modification. A coiled-coil region spans residues 115-253 (GTRDIQQLDA…SAEKSVLQGR (139 aa)). Disordered regions lie at residues 171-221 (QLKS…ANQR) and 249-293 (VLQG…AKLS). Residues 179–217 (EESRHRNSDRRRSEKRGSERRRVELRGSEQRVSDLDRRS) show a composition bias toward basic and acidic residues. A compositionally biased stretch (low complexity) spans 253 to 287 (RSARSRSPSPAPCSRSHSRSRSTSPSSAKARTPSP). Residues Ser286 and Ser508 each carry the phosphoserine modification.

This sequence belongs to the MIEAP family. Interacts (via coiled-coil domains) with BNIP3L (via BH3 domain). Interacts (via coiled-coil domains) with BNIP3 (via BH3 domain). Interacts with YWHAG/14-3-3 protein gamma; a protein that also plays a role in MALM.

It is found in the cytoplasm. The protein localises to the cytosol. It localises to the mitochondrion outer membrane. The protein resides in the mitochondrion matrix. In terms of biological role, key regulator of mitochondrial quality that mediates the repairing or degradation of unhealthy mitochondria in response to mitochondrial damage. Mediator of mitochondrial protein catabolic process (also named MALM) by mediating the degradation of damaged proteins inside mitochondria by promoting the accumulation in the mitochondrial matrix of hydrolases that are characteristic of the lysosomal lumen. Also involved in mitochondrion degradation of damaged mitochondria by promoting the formation of vacuole-like structures (named MIV), which engulf and degrade unhealthy mitochondria by accumulating lysosomes. The physical interaction of SPATA18/MIEAP, BNIP3 and BNIP3L/NIX at the mitochondrial outer membrane regulates the opening of a pore in the mitochondrial double membrane in order to mediate the translocation of lysosomal proteins from the cytoplasm to the mitochondrial matrix. Binds cardiolipin. May form molecular condensates (non-membrane-bounded organelles) within mitochondria that compartmentalize and promote cardiolipin metabolism. This chain is Mitochondria-eating protein (SPATA18), found in Bos taurus (Bovine).